The sequence spans 488 residues: Centrosomal protein cep57l1 (488 aa).

The stretch at L71–N226 forms a coiled coil. 2 disordered regions span residues S232–K272 and P311–S342. Residues R241 to K250 show a composition bias toward basic residues. 2 stretches are compositionally biased toward basic and acidic residues: residues P259–P270 and S314–P325. Residues K377–I403 adopt a coiled-coil conformation. The tract at residues L416 to A464 is disordered. Residues N452–A464 show a composition bias toward polar residues.

The protein belongs to the translokin family. Interacts with clip1, mis12, ndc80 and zwint. Interacts with gamma-tubulin.

The protein localises to the cytoplasm. It is found in the cytoskeleton. The protein resides in the microtubule organizing center. It localises to the centrosome. Its subcellular location is the chromosome. The protein localises to the centromere. It is found in the kinetochore. The protein resides in the spindle. Functionally, required for spindle microtubule attachment to both kinetochores and centrosomes. Also functions to tether minus-ends of spindle microtubules to centrosomes. May act by forming ring-like structures around microtubules, or by serving as a cross-linker or scaffold at the attachment site. The protein is Centrosomal protein cep57l1 (cep57l1) of Xenopus laevis (African clawed frog).